A 447-amino-acid polypeptide reads, in one-letter code: Putative bacteriocin-SkfA transport system permease protein SkfF (447 aa).

The Cytoplasmic segment spans residues 1–3; that stretch reads MPF. A helical membrane pass occupies residues 4-22; sequence LIMLLFVGAIGFQVSFVSR. Residues 23–29 are Extracellular-facing; it reads STTWDMS. A helical transmembrane segment spans residues 30–50; the sequence is IAGWVLTGVFILYTAFGLFSN. Over 51–59 the chain is Cytoplasmic; it reads RLPSQMADI. The helical transmembrane segment at 60-80 threads the bilayer; that stretch reads IWLYGTATSFSKVVYSVLFFS. At 81–85 the chain is on the extracellular side; the sequence is VTWKA. A helical transmembrane segment spans residues 86–104; that stretch reads LLWIISAIFGDVLIVLLSG. Residues 105 to 113 lie on the Cytoplasmic side of the membrane; it reads DHINLLGRS. The helical transmembrane segment at 114-134 threads the bilayer; that stretch reads IIFVGLFFIAEVWLMSVSCAR. The Extracellular portion of the chain corresponds to 135–141; the sequence is TVKKMKR. Residues 142–160 traverse the membrane as a helical segment; that stretch reads VYVLVFLLMLGIYSICLYR. The Cytoplasmic portion of the chain corresponds to 161–189; the sequence is FFFLQHSSGIWESIARFISGVGLVFDTLS. Residues 190–208 traverse the membrane as a helical segment; sequence PLYVVVFIGIITVSFMTIA. At 209 to 247 the chain is on the extracellular side; that stretch reads FTSRQVEMKESLVKEAEFWEEFQERQFGSGQIIQKPKTT. The helical transmembrane segment at 248–268 threads the bilayer; that stretch reads WWGLQGLNGIWSFLWLELLLF. Over 269–297 the chain is Cytoplasmic; the sequence is KKYLFFHSIHTVMLSGVFYVVIFMYPEWF. Residues 298 to 318 form a helical membrane-spanning segment; that stretch reads YLLFFLIVSAVMLSSYYSGIV. Residues 319-341 are Extracellular-facing; sequence RHSQSGTLHLFPGALWKKIIILE. A helical membrane pass occupies residues 342–360; it reads LTNTVWLYILYCVSITFMA. Residues 361–363 lie on the Cytoplasmic side of the membrane; it reads VGN. Residues 364–382 traverse the membrane as a helical segment; sequence LVYWYIYGLGIYIWFMTIR. Residues 383–404 lie on the Extracellular side of the membrane; the sequence is LFAFTHTNRNDIKLSLPQYYKS. A helical transmembrane segment spans residues 405–423; that stretch reads FFMALGLSGICLYVIHLLT. Over 424–426 the chain is Cytoplasmic; that stretch reads ADW. Residues 427–447 form a helical membrane-spanning segment; that stretch reads YTLVVVVCIGSLSWCLFYRFR.

It localises to the cell membrane. Probably part of the ABC transporter SkfEF involved in the export of the bacteriocin SKF. Probably responsible for the translocation of bacteriocin SkfA across the membrane. The chain is Putative bacteriocin-SkfA transport system permease protein SkfF from Bacillus subtilis (strain 168).